The chain runs to 89 residues: Small ribosomal subunit protein uS15 (89 aa).

Belongs to the universal ribosomal protein uS15 family. In terms of assembly, part of the 30S ribosomal subunit. Forms a bridge to the 50S subunit in the 70S ribosome, contacting the 23S rRNA.

One of the primary rRNA binding proteins, it binds directly to 16S rRNA where it helps nucleate assembly of the platform of the 30S subunit by binding and bridging several RNA helices of the 16S rRNA. Functionally, forms an intersubunit bridge (bridge B4) with the 23S rRNA of the 50S subunit in the ribosome. The sequence is that of Small ribosomal subunit protein uS15 from Chlamydia muridarum (strain MoPn / Nigg).